A 68-amino-acid polypeptide reads, in one-letter code: Small ribosomal subunit protein bS18c (68 aa).

It belongs to the bacterial ribosomal protein bS18 family. In terms of assembly, part of the 30S ribosomal subunit.

The protein resides in the plastid. It is found in the chloroplast. In Cyanidium caldarium (Red alga), this protein is Small ribosomal subunit protein bS18c (rps18).